The chain runs to 368 residues: Cytochrome-c peroxidase IdrP2 (368 aa).

Positions 1 to 27 are cleaved as a signal peptide; it reads MKWHRGRLTQTLGAMGLTATLTVAAQA. 2 consecutive Cytochrome c domains span residues 48–158 and 201–346; these read AMIE…ALWQ and KEAQ…LTLS. Cysteine 70, cysteine 73, histidine 74, cysteine 216, cysteine 219, and histidine 220 together coordinate heme c.

In terms of assembly, the iodate reductase (Idr) complex is composed of a molybdopterin-dependent iodate reductase (IdrA and IdrB subunits) and two associated peroxidases (IdrP1 and IdrP2). The cofactor is heme c.

The protein resides in the periplasm. It carries out the reaction 2 Fe(II)-[cytochrome c] + H2O2 + 2 H(+) = 2 Fe(III)-[cytochrome c] + 2 H2O. Involved in iodate respiration. Probably reduces the H(2)O(2) produced by IdrA/IdrB to H(2)O, using a reduced cytochrome c as the electron donor. In Pseudomonas sp. (strain SCT), this protein is Cytochrome-c peroxidase IdrP2.